The sequence spans 451 residues: MAVLGSLLLLILAATLSVAVAYDPLDPNGNITIKWDVMSWTPDGYVAMVTINNYQTYRQIMAPGWTVGWTWARQEVIWSMVGAQATDQGDCSRFKANLPHCCRRTPAVVDLLPGVPYNQQIANCCRGGVLPAYGQAPSAAAAAFQVSVGQAGTTNRTVRLPRNFTLLGPGPGYTCGRARVVPSTVFLTADRRRKTQALMTWNVTCTYSQHLASKYPSCCVSFSSFYNDTIVPCAKCACGCDAHKPCVRSERDGKRLAVTGKKHDANANAHGRGNGVAAAAMAAPLLQCTTHMCPVRVHWHVKLNYREYWRAKITIVNFNYRMNYTGWTLVAQHPNLDNITEVFSFDYKPVVSYGSINDTAMFYGLKYFNDQLMEAGPHGNVQSEVLMRKDARTFTFRQGWAFPRKVYFNGDECQMPPPDSYPYLPNAAPPAAASLVGSAVAMAALVFFLMA.

A signal peptide spans 1 to 21 (MAVLGSLLLLILAATLSVAVA). N-linked (GlcNAc...) asparagine glycosylation is found at N30, N155, N163, N202, N227, N323, N338, and N357. A lipid anchor (GPI-anchor amidated asparagine) is attached at N426. Residues 427-451 (AAPPAAASLVGSAVAMAALVFFLMA) constitute a propeptide, removed in mature form.

Belongs to the COBRA family.

The protein resides in the cell membrane. Involved in determining the orientation of cell expansion, probably by playing an important role in cellulose deposition. May act by recruiting cellulose synthesizing complexes to discrete positions on the cell surface. The protein is COBRA-like protein 6 (BC1L7) of Oryza sativa subsp. japonica (Rice).